The following is a 212-amino-acid chain: 3-isopropylmalate dehydratase small subunit (212 aa).

Belongs to the LeuD family. LeuD type 1 subfamily. In terms of assembly, heterodimer of LeuC and LeuD.

It carries out the reaction (2R,3S)-3-isopropylmalate = (2S)-2-isopropylmalate. The protein operates within amino-acid biosynthesis; L-leucine biosynthesis; L-leucine from 3-methyl-2-oxobutanoate: step 2/4. Catalyzes the isomerization between 2-isopropylmalate and 3-isopropylmalate, via the formation of 2-isopropylmaleate. The sequence is that of 3-isopropylmalate dehydratase small subunit from Dechloromonas aromatica (strain RCB).